The following is a 274-amino-acid chain: 3-methyl-2-oxobutanoate hydroxymethyltransferase (274 aa).

Residues aspartate 46 and aspartate 85 each contribute to the Mg(2+) site. 3-methyl-2-oxobutanoate-binding positions include 46 to 47, aspartate 85, and lysine 115; that span reads DS. Residue glutamate 117 participates in Mg(2+) binding. Glutamate 184 serves as the catalytic Proton acceptor.

Belongs to the PanB family. Homodecamer; pentamer of dimers. It depends on Mg(2+) as a cofactor.

The protein localises to the cytoplasm. It carries out the reaction 3-methyl-2-oxobutanoate + (6R)-5,10-methylene-5,6,7,8-tetrahydrofolate + H2O = 2-dehydropantoate + (6S)-5,6,7,8-tetrahydrofolate. Its pathway is cofactor biosynthesis; (R)-pantothenate biosynthesis; (R)-pantoate from 3-methyl-2-oxobutanoate: step 1/2. Functionally, catalyzes the reversible reaction in which hydroxymethyl group from 5,10-methylenetetrahydrofolate is transferred onto alpha-ketoisovalerate to form ketopantoate. The sequence is that of 3-methyl-2-oxobutanoate hydroxymethyltransferase from Thermoanaerobacter pseudethanolicus (strain ATCC 33223 / 39E) (Clostridium thermohydrosulfuricum).